Consider the following 359-residue polypeptide: Olfactory receptor 5T2 (359 aa).

At Met-1–Thr-64 the chain is on the extracellular side. Asn-44 carries an N-linked (GlcNAc...) asparagine glycan. Residues Ile-65 to Ile-85 form a helical membrane-spanning segment. Topologically, residues Leu-86–Gln-93 are cytoplasmic. Residues Leu-94–Ser-114 form a helical membrane-spanning segment. Residues Val-115–Ala-138 are Extracellular-facing. Residues Gln-139–Tyr-159 form a helical membrane-spanning segment. At Asp-160–Arg-178 the chain is on the cytoplasmic side. Residues Val-179–Thr-199 traverse the membrane as a helical segment. Residues Val-200–Gln-235 lie on the Extracellular side of the membrane. Residues Leu-236–Ser-256 traverse the membrane as a helical segment. At Tyr-257–Val-276 the chain is on the cytoplasmic side. A helical transmembrane segment spans residues Phe-277–Met-297. Residues Tyr-298–Asp-310 are Extracellular-facing. A helical membrane pass occupies residues Met-311 to Leu-331. Residues Arg-332–Lys-359 lie on the Cytoplasmic side of the membrane.

The protein belongs to the G-protein coupled receptor 1 family.

It is found in the cell membrane. In terms of biological role, odorant receptor. This chain is Olfactory receptor 5T2 (OR5T2), found in Homo sapiens (Human).